Consider the following 211-residue polypeptide: ATP-dependent Clp protease proteolytic subunit (211 aa).

S106 functions as the Nucleophile in the catalytic mechanism. The active site involves H131.

Belongs to the peptidase S14 family. Fourteen ClpP subunits assemble into 2 heptameric rings which stack back to back to give a disk-like structure with a central cavity, resembling the structure of eukaryotic proteasomes.

It localises to the cytoplasm. It carries out the reaction Hydrolysis of proteins to small peptides in the presence of ATP and magnesium. alpha-casein is the usual test substrate. In the absence of ATP, only oligopeptides shorter than five residues are hydrolyzed (such as succinyl-Leu-Tyr-|-NHMec, and Leu-Tyr-Leu-|-Tyr-Trp, in which cleavage of the -Tyr-|-Leu- and -Tyr-|-Trp bonds also occurs).. In terms of biological role, cleaves peptides in various proteins in a process that requires ATP hydrolysis. Has a chymotrypsin-like activity. Plays a major role in the degradation of misfolded proteins. This Rhodopseudomonas palustris (strain BisA53) protein is ATP-dependent Clp protease proteolytic subunit.